Reading from the N-terminus, the 110-residue chain is Thiosulfate sulfurtransferase GlpE (110 aa).

Positions arginine 17 to serine 105 constitute a Rhodanese domain. The active-site Cysteine persulfide intermediate is cysteine 65.

Belongs to the GlpE family.

It localises to the cytoplasm. It carries out the reaction thiosulfate + hydrogen cyanide = thiocyanate + sulfite + 2 H(+). The catalysed reaction is thiosulfate + [thioredoxin]-dithiol = [thioredoxin]-disulfide + hydrogen sulfide + sulfite + 2 H(+). Its function is as follows. Transferase that catalyzes the transfer of sulfur from thiosulfate to thiophilic acceptors such as cyanide or dithiols. May function in a CysM-independent thiosulfate assimilation pathway by catalyzing the conversion of thiosulfate to sulfite, which can then be used for L-cysteine biosynthesis. The chain is Thiosulfate sulfurtransferase GlpE from Pseudomonas aeruginosa (strain LESB58).